Here is a 61-residue protein sequence, read N- to C-terminus: Bacteriocin leucocin-B (61 aa).

Positions 1 to 24 (MNNMKSADNYQQLDNNALEQVVGG) are excised as a propeptide. A disulfide bridge links cysteine 33 with cysteine 38.

Belongs to the bacteriocin class IIA/YGNGV family.

It is found in the secreted. Its function is as follows. Active against L.monocytogenes and several lactic acid bacteria. This chain is Bacteriocin leucocin-B, found in Leuconostoc carnosum.